The primary structure comprises 500 residues: L-arabinose isomerase (500 aa).

Mn(2+) is bound by residues Glu-306, Glu-333, His-350, and His-450.

Belongs to the arabinose isomerase family. Homohexamer. The cofactor is Mn(2+).

It carries out the reaction beta-L-arabinopyranose = L-ribulose. Its pathway is carbohydrate degradation; L-arabinose degradation via L-ribulose; D-xylulose 5-phosphate from L-arabinose (bacterial route): step 1/3. Catalyzes the conversion of L-arabinose to L-ribulose. The chain is L-arabinose isomerase from Escherichia coli O7:K1 (strain IAI39 / ExPEC).